Here is a 487-residue protein sequence, read N- to C-terminus: Homoserine O-acetyltransferase (487 aa).

The region spanning asparagine 45–glutamate 352 is the AB hydrolase-1 domain. Serine 150 functions as the Nucleophile in the catalytic mechanism. Arginine 219 serves as a coordination point for substrate. Catalysis depends on residues aspartate 313 and histidine 346. Residue aspartate 347 participates in substrate binding. CBS domains follow at residues methionine 373 to leucine 430 and methionine 434 to glutamine 487.

This sequence belongs to the AB hydrolase superfamily. MetX family. Homodimer.

Its subcellular location is the cytoplasm. It catalyses the reaction L-homoserine + acetyl-CoA = O-acetyl-L-homoserine + CoA. The protein operates within amino-acid biosynthesis; L-methionine biosynthesis via de novo pathway; O-acetyl-L-homoserine from L-homoserine: step 1/1. Transfers an acetyl group from acetyl-CoA to L-homoserine, forming acetyl-L-homoserine. This chain is Homoserine O-acetyltransferase, found in Methanocorpusculum labreanum (strain ATCC 43576 / DSM 4855 / Z).